A 623-amino-acid chain; its full sequence is Glutathione import ATP-binding protein GsiA (623 aa).

2 ABC transporter domains span residues 15-269 (VENL…RALL) and 314-564 (LRVR…RKLL). ATP is bound by residues 49–56 (GESGSGKS) and 357–364 (GESGSGKS).

This sequence belongs to the ABC transporter superfamily. Glutathione importer (TC 3.A.1.5.11) family. The complex is composed of two ATP-binding proteins (GsiA), two transmembrane proteins (GsiC and GsiD) and a solute-binding protein (GsiB).

The protein resides in the cell inner membrane. The catalysed reaction is glutathione(out) + ATP + H2O = glutathione(in) + ADP + phosphate + H(+). With respect to regulation, inhibited by verapamil but not by carbonyl cyanide m-chlorophenylhydrazone (CCCP). In terms of biological role, part of the ABC transporter complex GsiABCD involved in glutathione import. Responsible for energy coupling to the transport system. The polypeptide is Glutathione import ATP-binding protein GsiA (Escherichia coli (strain K12)).